We begin with the raw amino-acid sequence, 419 residues long: Imidazolonepropionase (419 aa).

Residues His82 and His84 each contribute to the Fe(3+) site. Positions 82 and 84 each coordinate Zn(2+). Arg91, Tyr154, and His187 together coordinate 4-imidazolone-5-propanoate. Tyr154 serves as a coordination point for N-formimidoyl-L-glutamate. His252 provides a ligand contact to Fe(3+). His252 provides a ligand contact to Zn(2+). Glu255 contributes to the 4-imidazolone-5-propanoate binding site. Asp326 provides a ligand contact to Fe(3+). Residue Asp326 participates in Zn(2+) binding. Residues Asn328 and Gly330 each coordinate N-formimidoyl-L-glutamate. 4-imidazolone-5-propanoate is bound at residue Ser331.

This sequence belongs to the metallo-dependent hydrolases superfamily. HutI family. Zn(2+) serves as cofactor. It depends on Fe(3+) as a cofactor.

Its subcellular location is the cytoplasm. The catalysed reaction is 4-imidazolone-5-propanoate + H2O = N-formimidoyl-L-glutamate. It participates in amino-acid degradation; L-histidine degradation into L-glutamate; N-formimidoyl-L-glutamate from L-histidine: step 3/3. Functionally, catalyzes the hydrolytic cleavage of the carbon-nitrogen bond in imidazolone-5-propanoate to yield N-formimidoyl-L-glutamate. It is the third step in the universal histidine degradation pathway. This chain is Imidazolonepropionase, found in Clostridium tetani (strain Massachusetts / E88).